Reading from the N-terminus, the 176-residue chain is ATP synthase subunit delta (176 aa).

It belongs to the ATPase delta chain family. F-type ATPases have 2 components, F(1) - the catalytic core - and F(0) - the membrane proton channel. F(1) has five subunits: alpha(3), beta(3), gamma(1), delta(1), epsilon(1). F(0) has three main subunits: a(1), b(2) and c(10-14). The alpha and beta chains form an alternating ring which encloses part of the gamma chain. F(1) is attached to F(0) by a central stalk formed by the gamma and epsilon chains, while a peripheral stalk is formed by the delta and b chains.

The protein localises to the cell inner membrane. In terms of biological role, f(1)F(0) ATP synthase produces ATP from ADP in the presence of a proton or sodium gradient. F-type ATPases consist of two structural domains, F(1) containing the extramembraneous catalytic core and F(0) containing the membrane proton channel, linked together by a central stalk and a peripheral stalk. During catalysis, ATP synthesis in the catalytic domain of F(1) is coupled via a rotary mechanism of the central stalk subunits to proton translocation. This protein is part of the stalk that links CF(0) to CF(1). It either transmits conformational changes from CF(0) to CF(1) or is implicated in proton conduction. This is ATP synthase subunit delta from Actinobacillus succinogenes (strain ATCC 55618 / DSM 22257 / CCUG 43843 / 130Z).